The primary structure comprises 408 residues: S-adenosylmethionine synthase (408 aa).

ATP is bound at residue 142–147 (GEGSGD).

This sequence belongs to the AdoMet synthase 2 family. Requires Mg(2+) as cofactor.

It catalyses the reaction L-methionine + ATP + H2O = S-adenosyl-L-methionine + phosphate + diphosphate. The protein operates within amino-acid biosynthesis; S-adenosyl-L-methionine biosynthesis; S-adenosyl-L-methionine from L-methionine: step 1/1. Catalyzes the formation of S-adenosylmethionine from methionine and ATP. In Halobacterium salinarum (strain ATCC 29341 / DSM 671 / R1), this protein is S-adenosylmethionine synthase.